Here is a 180-residue protein sequence, read N- to C-terminus: GTP cyclohydrolase 1 (180 aa).

Zn(2+) is bound by residues C71, H74, and C142.

This sequence belongs to the GTP cyclohydrolase I family. As to quaternary structure, homomer.

The enzyme catalyses GTP + H2O = 7,8-dihydroneopterin 3'-triphosphate + formate + H(+). The protein operates within cofactor biosynthesis; 7,8-dihydroneopterin triphosphate biosynthesis; 7,8-dihydroneopterin triphosphate from GTP: step 1/1. The protein is GTP cyclohydrolase 1 of Helicobacter pylori (strain P12).